We begin with the raw amino-acid sequence, 398 residues long: MSKLVLVLNCGSSSLKFAVVDAQSGEQHLSGLAECLHLPEARIKWKLDGKHEAQLGEGAAHDEALSFIVETILASKPELAAQLKAIGHRVVHGGEQFTQSALIDDAVLKGIEDCAALAPLHNPAHIIGIKAAQKAFPELKNVAVFDTAFHQTMPEEAYLYALPYNLYKEHGIRRYGMHGTSHLFIAREAAERLGKPANELNIINCHLGNGASVCAIKNGQSVDTSMGLTPLEGLVMGTRCGDIDPAIIFHLHDTLGYSVEKINTMLTKESGLLGLTEVTSDCRFVEDNYGQKEEATRAMDVFCHRLAKYVAGYTASLDGRLDAITFTGGIGENSAPIREMVLNRLAIFGITVDSAANLKARFGGEGVITTADSRIPAMVIATNEELVIAEDTARLTNI.

Asn9 serves as a coordination point for Mg(2+). Residue Lys16 coordinates ATP. Substrate is bound at residue Arg89. The active-site Proton donor/acceptor is the Asp146. ATP contacts are provided by residues 206–210 (HLGNG), 281–283 (DCR), and 329–333 (GIGEN). Mg(2+) is bound at residue Glu384.

The protein belongs to the acetokinase family. As to quaternary structure, homodimer. The cofactor is Mg(2+). Requires Mn(2+) as cofactor.

It localises to the cytoplasm. It catalyses the reaction acetate + ATP = acetyl phosphate + ADP. The protein operates within metabolic intermediate biosynthesis; acetyl-CoA biosynthesis; acetyl-CoA from acetate: step 1/2. Functionally, catalyzes the formation of acetyl phosphate from acetate and ATP. Can also catalyze the reverse reaction. This Vibrio cholerae serotype O1 (strain ATCC 39315 / El Tor Inaba N16961) protein is Acetate kinase 1.